The primary structure comprises 418 residues: Ankyrin repeat domain-containing protein 61 (418 aa).

ANK repeat units follow at residues 27–57 (ALHS…NQPL), 74–103 (QPIF…DPEV), 131–160 (TRIQ…QVNA), 166–195 (NKHS…QVNA), 199–228 (SSMT…NVNC), 233–272 (TGNT…QVNA), 276–305 (EGQT…NVNI), and 309–342 (NGES…PLRL).

This is Ankyrin repeat domain-containing protein 61 (Ankrd61) from Rattus norvegicus (Rat).